Here is a 385-residue protein sequence, read N- to C-terminus: Exopolygalacturonase rpg15 (385 aa).

The first 26 residues, 1 to 26 (MVRFISFTSPIAALLLLSFGVKHAST), serve as a signal peptide directing secretion. N-linked (GlcNAc...) asparagine glycans are attached at residues asparagine 143, asparagine 161, asparagine 164, and asparagine 180. PbH1 repeat units follow at residues 165–195 (STNLVLHDFTLHTVSNNSYLPKNTDALDLYH), 196–217 (SSGITFRDSMLTIGDDCVAIKE), 219–241 (VEKVIVSNVTCRGGHGYSIGSLG), and 249–270 (VKHVNFRNSTCIDCENGVRVKT). Aspartate 210 (proton donor) is an active-site residue. A disulfide bond links cysteine 212 and cysteine 229. Asparagine 226 is a glycosylation site (N-linked (GlcNAc...) asparagine). The active site involves histidine 233. Asparagine 256, asparagine 319, and asparagine 343 each carry an N-linked (GlcNAc...) asparagine glycan. An intrachain disulfide couples cysteine 344 to cysteine 350. The stretch at 350-376 (CSDITFSGIDITKASNTTDNVCVYLEG) is one PbH1 5 repeat. An N-linked (GlcNAc...) asparagine glycan is attached at asparagine 365.

Belongs to the glycosyl hydrolase 28 family. In terms of processing, N-glycosylated.

It localises to the secreted. The enzyme catalyses [(1-&gt;4)-alpha-D-galacturonosyl](n) + H2O = alpha-D-galacturonate + [(1-&gt;4)-alpha-D-galacturonosyl](n-1). Functionally, specific in hydrolyzing the terminal glycosidic bond of polygalacturonic acid and oligogalacturonates. This Rhizopus delemar (strain RA 99-880 / ATCC MYA-4621 / FGSC 9543 / NRRL 43880) (Mucormycosis agent) protein is Exopolygalacturonase rpg15.